The chain runs to 160 residues: Phosphopantetheine adenylyltransferase (160 aa).

Substrate is bound at residue Thr-9. ATP is bound by residues 9-10 and His-17; that span reads TF. Residues Lys-41, Leu-73, and Arg-87 each contribute to the substrate site. Residues 88–90, Glu-98, and 123–129 each bind ATP; these read GLR and YSFLSSS.

The protein belongs to the bacterial CoaD family. As to quaternary structure, homohexamer. It depends on Mg(2+) as a cofactor.

The protein resides in the cytoplasm. The enzyme catalyses (R)-4'-phosphopantetheine + ATP + H(+) = 3'-dephospho-CoA + diphosphate. Its pathway is cofactor biosynthesis; coenzyme A biosynthesis; CoA from (R)-pantothenate: step 4/5. Its function is as follows. Reversibly transfers an adenylyl group from ATP to 4'-phosphopantetheine, yielding dephospho-CoA (dPCoA) and pyrophosphate. The protein is Phosphopantetheine adenylyltransferase of Moorella thermoacetica (strain ATCC 39073 / JCM 9320).